We begin with the raw amino-acid sequence, 134 residues long: Small ribosomal subunit protein uS8c (134 aa).

This sequence belongs to the universal ribosomal protein uS8 family. As to quaternary structure, part of the 30S ribosomal subunit.

The protein resides in the plastid. Functionally, one of the primary rRNA binding proteins, it binds directly to 16S rRNA central domain where it helps coordinate assembly of the platform of the 30S subunit. The protein is Small ribosomal subunit protein uS8c (rps8) of Cuscuta gronovii (Common dodder).